The sequence spans 626 residues: Nuclear RNA export factor 2 (626 aa).

S34 is subject to Phosphoserine. The RRM domain maps to W124–Y203. LRR repeat units follow at residues E271–P296, K297–L320, K321–D348, and C349–K376. Residues L391–V541 form the NTF2 domain. A TAP-C domain is found at Q570–I625.

The protein belongs to the NXF family. As to quaternary structure, interacts with NXT1, NXT2, E1B-AP5, the REF proteins and with nucleoporins, Nup62, Nup153 and Nup214. Interacts with LUZP4. As to expression, expressed almost exclusively in testis. Also expressed in several cancers.

It localises to the nucleus. The protein localises to the nucleoplasm. The protein resides in the cytoplasm. Functionally, involved in the export of mRNA from the nucleus to the cytoplasm. In Homo sapiens (Human), this protein is Nuclear RNA export factor 2 (NXF2).